The sequence spans 178 residues: MEQFHGTTILSVRRGNVVALGGDGQVTLGNIVMKGTARKVRKVYSGKVLVGFAGGTADAFTLLERFESKLEKHQGHLMRASVELAKDWRTDRMLRRLEAMLLVADHETTLVITGNGDVLEPNDGIGAIGSGGTYAQSAAKALQENTELSPLEIVKKSLTIAGELCIYTNLSHTIETLD.

Residue threonine 7 is part of the active site. Residues glycine 162, cysteine 165, and threonine 168 each coordinate Na(+).

The protein belongs to the peptidase T1B family. HslV subfamily. As to quaternary structure, a double ring-shaped homohexamer of HslV is capped on each side by a ring-shaped HslU homohexamer. The assembly of the HslU/HslV complex is dependent on binding of ATP.

Its subcellular location is the cytoplasm. The catalysed reaction is ATP-dependent cleavage of peptide bonds with broad specificity.. With respect to regulation, allosterically activated by HslU binding. Its function is as follows. Protease subunit of a proteasome-like degradation complex believed to be a general protein degrading machinery. This chain is ATP-dependent protease subunit HslV, found in Herminiimonas arsenicoxydans.